We begin with the raw amino-acid sequence, 139 residues long: D-ribose pyranase (139 aa).

His-20 serves as the catalytic Proton donor. Residues Asp-28, His-106, and 128 to 130 (YAN) contribute to the substrate site.

It belongs to the RbsD / FucU family. RbsD subfamily. As to quaternary structure, homodecamer.

Its subcellular location is the cytoplasm. It catalyses the reaction beta-D-ribopyranose = beta-D-ribofuranose. It participates in carbohydrate metabolism; D-ribose degradation; D-ribose 5-phosphate from beta-D-ribopyranose: step 1/2. Its function is as follows. Catalyzes the interconversion of beta-pyran and beta-furan forms of D-ribose. In Salmonella paratyphi B (strain ATCC BAA-1250 / SPB7), this protein is D-ribose pyranase.